The following is a 1729-amino-acid chain: Zinc finger CCCH domain-containing protein 13 (1729 aa).

Disordered regions lie at residues 1-40 (MSKI…TTET) and 57-156 (CRFI…NGDI). Positions 10–23 (VENTKTISESTSRR) are enriched in polar residues. Residues 36–64 (STTETQCRNWLKTGSCLYGNTCRFIHGPS) form a C3H1-type zinc finger. 2 positions are modified to phosphoserine: Ser-64 and Ser-77. Residues 76–136 (RSPERPTGDL…IKIVKERTPE (61 aa)) are compositionally biased toward basic and acidic residues. The stretch at 162-196 (HELSLEMKRQKIQRELMKLEQENMDKREEIIIQKE) forms a coiled coil. Residue Lys-179 forms a Glycyl lysine isopeptide (Lys-Gly) (interchain with G-Cter in SUMO2) linkage. Over residues 182-193 (QENMDKREEIII) the composition is skewed to basic and acidic residues. Disordered regions lie at residues 182-528 (QENM…IRDV) and 581-1527 (DVYQ…PISD). 4 positions are modified to phosphoserine: Ser-198, Ser-207, Ser-209, and Ser-211. Over residues 204–213 (SKLSPSPSLR) the composition is skewed to low complexity. Over residues 214–224 (KSSKSPKRKSS) the composition is skewed to basic residues. Ser-242 is modified (phosphoserine). The span at 245–254 (LDQQRNSKGN) shows a compositional bias: polar residues. Residue Thr-263 is modified to Phosphothreonine. Ser-265 carries the post-translational modification Phosphoserine. Residues 283-315 (KYKVKDRIEEKPRDGKDRGRDFEKQREKRDKPR) show a composition bias toward basic and acidic residues. Residues Ser-316, Ser-318, Ser-324, and Ser-327 each carry the phosphoserine modification. The segment covering 321–345 (QHHSPLSSRHHSSSSQSGSSIQRHS) has biased composition (low complexity). Phosphothreonine occurs at positions 353 and 363. The segment covering 358 to 368 (YQRTLTPSLRR) has biased composition (polar residues). Residues Ser-369, Ser-371, and Ser-380 each carry the phosphoserine modification. Composition is skewed to basic and acidic residues over residues 393-528 (PMRE…IRDV) and 581-636 (DVYQ…EKGS). Over residues 639-654 (TRGSQMDSHSSGSNYH) the composition is skewed to polar residues. A compositionally biased stretch (basic and acidic residues) spans 655 to 701 (DSWETRSSYPERDRYPERDTRDPARDSSFERRHGERDRRDNRERDQR). Residue Ser-704 is modified to Phosphoserine. Residues 706 to 865 (IRHQGRSEEL…KERERQREWE (160 aa)) adopt a coiled-coil conformation. The span at 710–897 (GRSEELERDE…IPRDSHEERK (188 aa)) shows a compositional bias: basic and acidic residues. Ser-907, Ser-909, Ser-913, Ser-921, Ser-924, Ser-929, Ser-949, Ser-951, and Ser-953 each carry phosphoserine. The span at 920-938 (HSPDSDTYHSGDDKNEKHR) shows a compositional bias: basic and acidic residues. Positions 957-1035 (LTEDRQGRWK…GSDRAHDEKK (79 aa)) are enriched in basic and acidic residues. Thr-958 bears the Phosphothreonine mark. Over residues 1036 to 1046 (KAKAPKKPVKK) the composition is skewed to basic residues. Positions 1047 to 1065 (KKEEDVGVERGNLETHEDS) are enriched in basic and acidic residues. Phosphoserine occurs at positions 1069, 1086, 1090, and 1093. Positions 1072–1086 (KGQKKKNIEKKRKRS) are enriched in basic residues. Thr-1109 bears the Phosphothreonine mark. Composition is skewed to basic and acidic residues over residues 1114–1137 (IKEE…KKEN) and 1149–1159 (PDRTEGLEAEH). Composition is skewed to low complexity over residues 1160-1176 (TAAT…LSSL) and 1184-1218 (AAAS…TNGS). The segment covering 1228 to 1253 (ARGEKVEVSHVTLEDTPHRKLVDQKR) has biased composition (basic and acidic residues). Phosphoserine occurs at positions 1256, 1259, 1273, and 1275. The segment covering 1278 to 1288 (SAHRSGDDQGS) has biased composition (basic and acidic residues). A Phosphoserine modification is found at Ser-1295. Composition is skewed to basic and acidic residues over residues 1296–1351 (GSRD…DRQV) and 1359–1440 (DSRD…ERTF). Phosphoserine occurs at positions 1427, 1443, 1447, 1467, 1470, 1499, and 1526. Basic and acidic residues-rich tracts occupy residues 1447-1482 (SGKR…DRDL) and 1490-1499 (DVSKAERTES).

This sequence belongs to the ZC3H13 family. Component of the WMM complex, a N6-methyltransferase complex composed of a catalytic subcomplex, named MAC, and of an associated subcomplex, named MACOM. The MAC subcomplex is composed of METTL3 and METTL14. The MACOM subcomplex is composed of WTAP, ZC3H13, CBLL1/HAKAI, VIRMA, and, in some cases of RBM15 (RBM15 or RBM15B). Also a component of a MACOM-like complex, named WTAP complex, composed of WTAP, ZC3H13, CBLL1/HAKAI, VIRMA, RBM15, BCLAF1 and THRAP3.

It localises to the nucleus speckle. The protein resides in the nucleus. It is found in the nucleoplasm. Functionally, associated component of the WMM complex, a complex that mediates N6-methyladenosine (m6A) methylation of RNAs, a modification that plays a role in the efficiency of mRNA splicing and RNA processing. Acts as a key regulator of m6A methylation by promoting m6A methylation of mRNAs at the 3'-UTR. Controls embryonic stem cells (ESCs) pluripotency via its role in m6A methylation. In the WMM complex, anchors component of the MACOM subcomplex in the nucleus. Also required for bridging WTAP to the RNA-binding component RBM15 (RBM15 or RBM15B). The polypeptide is Zinc finger CCCH domain-containing protein 13 (Mus musculus (Mouse)).